Here is a 179-residue protein sequence, read N- to C-terminus: Large ribosomal subunit protein uL5 (179 aa).

Belongs to the universal ribosomal protein uL5 family. As to quaternary structure, part of the 50S ribosomal subunit; part of the 5S rRNA/L5/L18/L25 subcomplex. Contacts the 5S rRNA and the P site tRNA. Forms a bridge to the 30S subunit in the 70S ribosome.

Its function is as follows. This is one of the proteins that bind and probably mediate the attachment of the 5S RNA into the large ribosomal subunit, where it forms part of the central protuberance. In the 70S ribosome it contacts protein S13 of the 30S subunit (bridge B1b), connecting the 2 subunits; this bridge is implicated in subunit movement. Contacts the P site tRNA; the 5S rRNA and some of its associated proteins might help stabilize positioning of ribosome-bound tRNAs. This is Large ribosomal subunit protein uL5 from Francisella tularensis subsp. mediasiatica (strain FSC147).